Consider the following 134-residue polypeptide: ATP synthase epsilon chain, chloroplastic (134 aa).

This sequence belongs to the ATPase epsilon chain family. In terms of assembly, F-type ATPases have 2 components, CF(1) - the catalytic core - and CF(0) - the membrane proton channel. CF(1) has five subunits: alpha(3), beta(3), gamma(1), delta(1), epsilon(1). CF(0) has three main subunits: a, b and c.

Its subcellular location is the plastid. The protein resides in the chloroplast thylakoid membrane. Its function is as follows. Produces ATP from ADP in the presence of a proton gradient across the membrane. The sequence is that of ATP synthase epsilon chain, chloroplastic from Pyropia yezoensis (Susabi-nori).